Reading from the N-terminus, the 167-residue chain is MRTLMIEPLTKEAFAPFGDVIETDGSDHFMINNGSTMRFHKLATVETAEPEDKAIISIFRADALDMPLTVRMLERHPLGSQAFIPLLGNPFLIVVAPVGDAPVSGLVRAFRSNGRQGVNYHRGVWHHPVLTIEKRDDFLVVDRSGSGNNCDEHYFTEEQMLILNPHQ.

This sequence belongs to the ureidoglycolate lyase family. Homodimer. The cofactor is Ni(2+).

The catalysed reaction is (S)-ureidoglycolate = urea + glyoxylate. It functions in the pathway nitrogen metabolism; (S)-allantoin degradation. Functionally, catalyzes the catabolism of the allantoin degradation intermediate (S)-ureidoglycolate, generating urea and glyoxylate. Involved in the utilization of allantoin as nitrogen source. This Pseudomonas putida (strain W619) protein is Ureidoglycolate lyase.